A 403-amino-acid polypeptide reads, in one-letter code: Double C2-like domain-containing protein alpha (403 aa).

Positions 1-92 (MRGRRGDRMT…DSYDSDDTTA (92 aa)) are interaction with UNC13D and DYNLT1. C2 domains are found at residues 92-214 (ALGT…HFNI) and 254-387 (ERGR…ERWH). The Ca(2+) site is built by D123, D129, D184, D186, D285, D291, D345, D347, and D353. Residues 218-403 (RQVPLPSPSS…PPAAGALPLA (186 aa)) are interaction with UNC13D.

In terms of assembly, interacts (via N-terminus) with UNC13A. Interacts with cytoplasmic dynein light chain DYNLT1. Interacts with UNC13D. Requires Ca(2+) as cofactor. Predominantly expressed in brain. Also found in non-neural tissues. Expressed in RBL-2H3 mast cell line.

The protein resides in the cytoplasmic vesicle. It is found in the secretory vesicle. It localises to the synaptic vesicle membrane. The protein localises to the synapse. Its subcellular location is the synaptosome. The protein resides in the lysosome. Its function is as follows. Calcium sensor which most probably regulates fusion of vesicles with membranes. Binds calcium and phospholipids. May be involved in calcium dependent neurotransmitter release through the interaction with UNC13A. May be involved in calcium-dependent spontaneous release of neurotransmitter in absence of action potentials in neuronal cells. Regulates Ca(2+)-dependent secretory lysosome exocytosis in mast cells. The polypeptide is Double C2-like domain-containing protein alpha (Doc2a) (Rattus norvegicus (Rat)).